We begin with the raw amino-acid sequence, 339 residues long: Large ribosomal subunit protein uL10 (339 aa).

The tract at residues 305-339 (TQPQQEEKVEEAEEEEEEEEASEEDALAGLGALFG) is disordered. The segment covering 312 to 330 (KVEEAEEEEEEEEASEEDA) has biased composition (acidic residues).

Belongs to the universal ribosomal protein uL10 family. As to quaternary structure, part of the 50S ribosomal subunit. Forms part of the ribosomal stalk which helps the ribosome interact with GTP-bound translation factors. Forms a heptameric L10(L12)2(L12)2(L12)2 complex, where L10 forms an elongated spine to which the L12 dimers bind in a sequential fashion.

In terms of biological role, forms part of the ribosomal stalk, playing a central role in the interaction of the ribosome with GTP-bound translation factors. This chain is Large ribosomal subunit protein uL10, found in Thermococcus onnurineus (strain NA1).